The sequence spans 1749 residues: Intraflagellar transport protein 172 homolog (1749 aa).

The residue at position 1 (Met-1) is an N-acetylmethionine. Lys-4 participates in a covalent cross-link: Glycyl lysine isopeptide (Lys-Gly) (interchain with G-Cter in SUMO1). WD repeat units lie at residues 14–53, 64–103, 110–148, 150–191, 195–233, 238–278, 284–323, 483–520, and 521–559; these read DGAA…RDKF, RKSY…GDKK, IQTS…SSTI, GTES…ESQG, NHPC…QTFD, PQER…WEEA, ANLY…SIYK, SHES…CSKT, and MILN…ERVT. One copy of the TPR 1 repeat lies at 593–624; the sequence is DEGLIEFGTAIDDGNYTRATAFLETLEMTPET. Position 672 is an omega-N-methylarginine (Arg-672). 13 TPR repeats span residues 692 to 725, 809 to 842, 854 to 887, 912 to 945, 947 to 970, 971 to 1004, 1042 to 1075, 1142 to 1175, 1276 to 1309, 1345 to 1378, 1411 to 1445, 1447 to 1477, and 1574 to 1607; these read EKNY…EECI, GELY…MKAV, VRLE…IKAI, SKYY…KDAI, MYTQ…PEDV, SVLY…DLAI, EGRL…EEAY, PEIH…KEAV, VEGL…GSSG, IGKH…NKAK, GVDV…LHKY, ALYA…NPQN, and DKAF…TDAI.

Belongs to the IFT172 family. Interacts with IFT88. Interacts with IFT57. Interacts with RABL2/RABL2A; binds preferentially to GDP-bound RABL2. In terms of tissue distribution, co-localizes with RABL2/RABL2A in the midpiece of elongated spermatids within the testis (at protein level). Expressed in the flagellum of elongated spermatids and sperm in the testis lumen (at protein level).

The protein resides in the cell projection. It is found in the cilium. Its function is as follows. Required for the maintenance and formation of cilia. Plays an indirect role in hedgehog (Hh) signaling, cilia being required for all activity of the hedgehog pathway. This is Intraflagellar transport protein 172 homolog (Ift172) from Mus musculus (Mouse).